Here is a 236-residue protein sequence, read N- to C-terminus: Ribosome assembly factor MRT4 (236 aa).

This sequence belongs to the universal ribosomal protein uL10 family. In terms of assembly, associates with the pre-60S ribosomal particle.

The protein localises to the nucleus. It localises to the nucleolus. The protein resides in the cytoplasm. Its function is as follows. Component of the ribosome assembly machinery. Nuclear paralog of the ribosomal protein P0, it binds pre-60S subunits at an early stage of assembly in the nucleolus, and is replaced by P0 in cytoplasmic pre-60S subunits and mature 80S ribosomes. The chain is Ribosome assembly factor MRT4 from Saccharomyces cerevisiae (strain ATCC 204508 / S288c) (Baker's yeast).